A 485-amino-acid chain; its full sequence is Pre-glycoprotein polyprotein GP complex (485 aa).

Glycine 2 is lipidated: N-myristoyl glycine; by host. Residues 2 to 17 (GQFISFMQEIPTFLQE) are Extracellular-facing. Residues 18-33 (ALNIALVAVSLIAIIK) traverse the membrane as a helical segment. Residues 34–58 (GVVNLYKSGLFQFFVFLALAGRSCT) are Cytoplasmic-facing. A Zn(2+)-binding site is contributed by cysteine 57. Residues 59-424 (EEAFKIGLHT…QGKTPLTLVD (366 aa)) are Extracellular-facing. Cystine bridges form between cysteine 92–cysteine 226, cysteine 135–cysteine 164, cysteine 207–cysteine 213, cysteine 271–cysteine 284, cysteine 293–cysteine 302, and cysteine 356–cysteine 377. N-linked (GlcNAc...) asparagine; by host glycans are attached at residues asparagine 95 and asparagine 105. Asparagine 166 and asparagine 178 each carry an N-linked (GlcNAc...) asparagine; by host glycan. Positions 250-286 (LKAFFSWSLTDSSGKDTPGGYCLEEWMLVAAKMKCFG) are fusion. The tract at residues 287-355 (NTAVAKCNLN…KIRELMSVPY (69 aa)) is HR1. N-linked (GlcNAc...) asparagine; by host glycans are attached at residues asparagine 357, asparagine 365, asparagine 382, and asparagine 387. An HR2 region spans residues 360–423 (KFWYVNHTLS…RQGKTPLTLV (64 aa)). A helical membrane pass occupies residues 425 to 445 (ICFWSTVFFTASLFLHLVGIP). Residues 446–485 (THRHIRGEACPLPHRLNSLGGCRCGKYPNLKKPTVWRRGH) lie on the Cytoplasmic side of the membrane. Zn(2+) is bound by residues histidine 447, histidine 449, cysteine 455, histidine 459, cysteine 467, cysteine 469, and histidine 485.

The protein belongs to the arenaviridae GPC protein family. Interacts with glycoprotein G2. Part of the GP complex (GP-C) together with glycoprotein G1 and glycoprotein G2. The GP-complex interacts with protein Z, which interacts with ribonucleocapsid; these interactions may induce virion budding. In terms of assembly, homotrimer; disulfide-linked. In pre-fusion state, G1 homotrimers bind G2 homotrimers via ionic interactions. Part of the GP complex (GP-C) together with glycoprotein G2 and the stable signal peptide. Interacts with host TFRC. The GP-complex interacts with protein Z, which interacts with ribonucleocapsid; these interactions may induce virion budding. As to quaternary structure, homotrimer. Interacts with the stable signal peptide. In pre-fusion state, G2 homotrimers bind G1 homotrimers via ionic interactions. Part of the GP complex (GP-C) together with glycoprotein G1 and the stable signal peptide. Acidification in the endosome triggers rearrangements, which ultimately leads to a 6 helix bundle formed by the two heptad repeat domains (HR1 and HR2) in post-fusion state. The GP-complex interacts with protein Z, which interacts with ribonucleocapsid; these interactions may induce virion budding. In terms of processing, specific enzymatic cleavages in vivo yield mature proteins. GP-C polyprotein is cleaved in the endoplasmic reticulum by the host protease MBTPS1. Only cleaved glycoprotein is incorporated into virions. The SSP remains stably associated with the GP complex following cleavage by signal peptidase and plays crucial roles in the trafficking of GP through the secretory pathway. Post-translationally, myristoylation is necessary for GP2-mediated fusion activity.

It is found in the virion membrane. The protein resides in the host endoplasmic reticulum membrane. It localises to the host Golgi apparatus membrane. The protein localises to the host cell membrane. Functions as a cleaved signal peptide that is retained as the third component of the GP complex (GP-C). Helps to stabilize the spike complex in its native conformation. The SSP is required for efficient glycoprotein expression, post-translational maturation cleavage of G1 and G2, glycoprotein transport to the cell surface plasma membrane, formation of infectious virus particles, and acid pH-dependent glycoprotein-mediated cell fusion. In terms of biological role, forms the virion spikes together with glycoprotein G2. The glycoprotein spike trimers are connected to the underlying matrix. Mediates virus attachment to host TFRC. This attachment induces virion internalization predominantly through clathrin-mediated endocytosis. Its function is as follows. Forms the virion spikes together with glycoprotein G1. The glycoprotein spike trimers are connected to the underlying matrix. Class I viral fusion protein that directs fusion of viral and host endosomal membranes, leading to delivery of the nucleocapsid into the cytoplasm. Membrane fusion is mediated by irreversible conformational changes induced by acidification. The polypeptide is Pre-glycoprotein polyprotein GP complex (Junin mammarenavirus (JUNV)).